The chain runs to 239 residues: Ribonuclease 3 (239 aa).

An RNase III domain is found at 18–141; sequence YTTLEKALGY…LMAGVYLEAG (124 aa). A Mg(2+)-binding site is contributed by Glu-54. Residue Asp-58 is part of the active site. 2 residues coordinate Mg(2+): Ser-127 and Glu-130. Residue Glu-130 is part of the active site. The 70-residue stretch at 168–237 folds into the DRBM domain; sequence DYKTALQELT…AYYALQKLKE (70 aa).

Belongs to the ribonuclease III family. As to quaternary structure, homodimer. The cofactor is Mg(2+).

The protein localises to the cytoplasm. The catalysed reaction is Endonucleolytic cleavage to 5'-phosphomonoester.. In terms of biological role, digests double-stranded RNA. Involved in the processing of primary rRNA transcript to yield the immediate precursors to the large and small rRNAs (23S and 16S). Processes some mRNAs, and tRNAs when they are encoded in the rRNA operon. Processes pre-crRNA and tracrRNA of type II CRISPR loci if present in the organism. This Helicobacter pylori (strain G27) protein is Ribonuclease 3.